A 561-amino-acid chain; its full sequence is Excitatory amino acid transporter 4 (561 aa).

The Cytoplasmic segment spans residues 1 to 52 (MSSHGNSLFLRESGAGGGCLQGLQDSLQQRALRTRLRLQTMTREHVRRFLRR). A Phosphoserine modification is found at serine 2. The next 3 membrane-spanning stretches (helical) occupy residues 53–73 (NAFI…AFAL), 96–116 (MLQM…MASL), and 130–150 (VYYM…VTII). 3 N-linked (GlcNAc...) asparagine glycosylation sites follow: asparagine 213, asparagine 229, and asparagine 236. 3 helical membrane-spanning segments follow: residues 259–282 (SANG…IGGM), 292–319 (FFDS…LFLI), and 341–362 (LTVI…YFLV). The discontinuously helical intramembrane region spans 368-398 (FPFIGGILQALITAMGTSSSSATLPITFRCL). Residue 385 to 387 (SSS) coordinates L-aspartate. The chain crosses the membrane as a helical span at residues 408–434 (ITRFVLPVGATVNMDGTALYEALAAIF). Na(+) contacts are provided by glycine 416, threonine 418, and asparagine 420. Residues threonine 424, 465 to 469 (IPQAG), aspartate 498, and asparagine 505 contribute to the L-aspartate site. Residues 448–481 (ITTISITATAASVGAAGIPQAGLVTMVIVLTSVG) constitute an intramembrane region (discontinuously helical). A helical transmembrane segment spans residues 495 to 516 (WFLDRLRTMTNVLGDSIGAAVI). Residues asparagine 505 and aspartate 509 each contribute to the Na(+) site.

It belongs to the dicarboxylate/amino acid:cation symporter (DAACS) (TC 2.A.23) family. SLC1A6 subfamily. In terms of assembly, homotrimer.

The protein resides in the cell membrane. The enzyme catalyses K(+)(in) + L-glutamate(out) + 3 Na(+)(out) + H(+)(out) = K(+)(out) + L-glutamate(in) + 3 Na(+)(in) + H(+)(in). It catalyses the reaction K(+)(in) + L-aspartate(out) + 3 Na(+)(out) + H(+)(out) = K(+)(out) + L-aspartate(in) + 3 Na(+)(in) + H(+)(in). The catalysed reaction is D-aspartate(out) + K(+)(in) + 3 Na(+)(out) + H(+)(out) = D-aspartate(in) + K(+)(out) + 3 Na(+)(in) + H(+)(in). In terms of biological role, sodium-dependent, high-affinity amino acid transporter that mediates the uptake of L-glutamate and also L-aspartate and D-aspartate. Functions as a symporter that transports one amino acid molecule together with two or three Na(+) ions and one proton, in parallel with the counter-transport of one K(+) ion. Mediates Cl(-) flux that is not coupled to amino acid transport; this avoids the accumulation of negative charges due to aspartate and Na(+) symport. Plays a redundant role in the rapid removal of released glutamate from the synaptic cleft, which is essential for terminating the postsynaptic action of glutamate. This Rattus norvegicus (Rat) protein is Excitatory amino acid transporter 4 (Slc1a6).